The primary structure comprises 344 residues: Methionine import ATP-binding protein MetN (344 aa).

An ABC transporter domain is found at 2-241; the sequence is IEIKSVNKVF…PKTELAHQFI (240 aa). Residue 38 to 45 coordinates ATP; sequence GSSGAGKS.

It belongs to the ABC transporter superfamily. Methionine importer (TC 3.A.1.24) family. In terms of assembly, the complex is composed of two ATP-binding proteins (MetN), two transmembrane proteins (MetI) and a solute-binding protein (MetQ).

Its subcellular location is the cell inner membrane. The enzyme catalyses L-methionine(out) + ATP + H2O = L-methionine(in) + ADP + phosphate + H(+). It carries out the reaction D-methionine(out) + ATP + H2O = D-methionine(in) + ADP + phosphate + H(+). Functionally, part of the ABC transporter complex MetNIQ involved in methionine import. Responsible for energy coupling to the transport system. This chain is Methionine import ATP-binding protein MetN, found in Vibrio cholerae serotype O1 (strain ATCC 39315 / El Tor Inaba N16961).